Reading from the N-terminus, the 626-residue chain is Protein MICRORCHIDIA 2 (626 aa).

A coiled-coil region spans residues 579–626 (MRCEEYIKKENETEQTVKSLEKELEEFKSKCAHLALLVDAKKKEMQQA).

It belongs to the MORC ATPase protein family. As to quaternary structure, homodimer and heterodimer with MORC6. Component of an RNA-directed DNA methylation (RdDM) complex that contains at least MORC6, MORC1/CRT1, MORC2, SWI3D and SUVH9. Binds directly to SUVH9. It depends on Mg(2+) as a cofactor. Mn(2+) serves as cofactor.

The protein localises to the nucleus. It localises to the endosome. Functionally, mediator of defense signaling triggered by distinct classes of R proteins. Required during hypersensitive response (HR) that confers disease resistance to turnip crinkle virus (TCV). Contributes to resistance against Pseudomonas syringae and Hyaloperonospora arabidopsidis, at early stages prior to cytosolic calcium ions Ca(2+) accumulation. Required for pathogen-associated molecular pattern (PAMP)-triggered immunity, basal resistance, non-host resistance and systemic acquired resistance (SAR). Involved in RNA-directed DNA methylation (RdDM) as a component of the RdDM machinery and required for gene silencing. May also be involved in the regulation of chromatin architecture to maintain gene silencing. Exhibits ATPase activity. In Arabidopsis thaliana (Mouse-ear cress), this protein is Protein MICRORCHIDIA 2.